The primary structure comprises 282 residues: Halorhodopsin (282 aa).

The Extracellular segment spans residues 1-29 (MMETAADALASGTVPLEMTQTQIFEAIQG). A helical transmembrane segment spans residues 30–55 (DTLLASSLWINIALAGLSILLFVYMG). Residues 56 to 61 (RNLEDP) lie on the Cytoplasmic side of the membrane. The helical transmembrane segment at 62–85 (RAQLIFVATLMVPLVSISSYTGLV) threads the bilayer. Over 86–109 (SGLTVSFLEMPAGHALAGQEVLTP) the chain is Extracellular. Residues 110–131 (WGRYLTWALSTPMILVALGLLA) traverse the membrane as a helical segment. The Cytoplasmic portion of the chain corresponds to 132 to 134 (GSN). Residues 135 to 158 (ATKLFTAVTADIGMCVTGLAAALT) form a helical membrane-spanning segment. Topologically, residues 159-161 (TSS) are extracellular. A helical membrane pass occupies residues 162–184 (YLLRWVWYVISCAFFVVVLYVLL). Residues 185-196 (AEWAEDAEVAGT) are Cytoplasmic-facing. Residues 197–220 (AEIFNTLKLLTVVLWLGYPIFWAL) form a helical membrane-spanning segment. Over 221–229 (GAEGLAVLD) the chain is Extracellular. A helical transmembrane segment spans residues 230–258 (VAVTSWAYSGMDIVAKYLFAFLLLRWVVD). Lysine 245 carries the N6-(retinylidene)lysine modification. The Cytoplasmic portion of the chain corresponds to 259–282 (NERTVAGMAAGLGAPLARCAPADD).

The protein belongs to the archaeal/bacterial/fungal opsin family.

Its subcellular location is the cell membrane. In terms of biological role, light-driven chloride pump. In Halorubrum sodomense, this protein is Halorhodopsin (hop).